The primary structure comprises 131 residues: Small ribosomal subunit protein uS8 (131 aa).

It belongs to the universal ribosomal protein uS8 family. In terms of assembly, part of the 30S ribosomal subunit. Contacts proteins S5 and S12.

One of the primary rRNA binding proteins, it binds directly to 16S rRNA central domain where it helps coordinate assembly of the platform of the 30S subunit. This chain is Small ribosomal subunit protein uS8, found in Aromatoleum aromaticum (strain DSM 19018 / LMG 30748 / EbN1) (Azoarcus sp. (strain EbN1)).